Consider the following 636-residue polypeptide: DNA ligase (636 aa).

The active-site N6-AMP-lysine intermediate is the K113. Positions 560-636 (NSEGIFQNQT…KSSFSKKFEK (77 aa)) constitute a BRCT domain.

This sequence belongs to the NAD-dependent DNA ligase family.

The enzyme catalyses NAD(+) + (deoxyribonucleotide)n-3'-hydroxyl + 5'-phospho-(deoxyribonucleotide)m = (deoxyribonucleotide)n+m + AMP + beta-nicotinamide D-nucleotide.. In terms of biological role, catalyzes the formation of phosphodiester linkages between 5'-phosphoryl and 3'-hydroxyl groups in double-stranded DNA using NAD as a coenzyme and as the energy source for the reaction. The polypeptide is DNA ligase (Acanthamoeba polyphaga (Amoeba)).